Consider the following 272-residue polypeptide: NH(3)-dependent NAD(+) synthetase (272 aa).

45-52 contacts ATP; the sequence is GISGGQDS. Asp51 lines the Mg(2+) pocket. Arg138 lines the deamido-NAD(+) pocket. ATP is bound at residue Thr158. Mg(2+) is bound at residue Glu163. 2 residues coordinate deamido-NAD(+): Lys171 and Asp178. Residues Lys187 and Thr209 each contribute to the ATP site. Residue 258 to 259 coordinates deamido-NAD(+); that stretch reads HK.

The protein belongs to the NAD synthetase family. As to quaternary structure, homodimer.

The catalysed reaction is deamido-NAD(+) + NH4(+) + ATP = AMP + diphosphate + NAD(+) + H(+). The protein operates within cofactor biosynthesis; NAD(+) biosynthesis; NAD(+) from deamido-NAD(+) (ammonia route): step 1/1. Its function is as follows. Catalyzes the ATP-dependent amidation of deamido-NAD to form NAD. Uses ammonia as a nitrogen source. This chain is NH(3)-dependent NAD(+) synthetase, found in Bacillus cereus (strain ATCC 14579 / DSM 31 / CCUG 7414 / JCM 2152 / NBRC 15305 / NCIMB 9373 / NCTC 2599 / NRRL B-3711).